Reading from the N-terminus, the 520-residue chain is Maturase K (520 aa).

The protein belongs to the intron maturase 2 family. MatK subfamily.

It is found in the plastid. The protein resides in the chloroplast. Its function is as follows. Usually encoded in the trnK tRNA gene intron. Probably assists in splicing its own and other chloroplast group II introns. The protein is Maturase K of Maianthemum dilatatum (False lily-of-the-valley).